The primary structure comprises 789 residues: Homocitrate dehydratase, mitochondrial (789 aa).

Residues 1–14 constitute a mitochondrion transit peptide; the sequence is MLSSANRFYIKRHL. Substrate-binding positions include Gln-96 and 189–191; that span reads DSH. [4Fe-4S] cluster-binding residues include Cys-385, Cys-448, and Cys-451. Residues Arg-476, Arg-481, Lys-610, and 672–673 contribute to the substrate site; that span reads AR.

It belongs to the aconitase/IPM isomerase family. [4Fe-4S] cluster is required as a cofactor.

The protein resides in the mitochondrion. The catalysed reaction is (2R)-homocitrate = cis-homoaconitate + H2O. Its pathway is amino-acid biosynthesis; L-lysine biosynthesis via AAA pathway; L-alpha-aminoadipate from 2-oxoglutarate: step 2/5. Catalyzes the reversible dehydration of (R)-homocitrate to cis-homoaconitate, a step in the alpha-aminoadipate pathway for lysine biosynthesis. This chain is Homocitrate dehydratase, mitochondrial (ACO2), found in Saccharomyces cerevisiae (strain ATCC 204508 / S288c) (Baker's yeast).